A 63-amino-acid chain; its full sequence is MVFALVCASCGRDLSEVRYRLLIERQKLSDVLRNLTHMCCRLKLATQIEPYRNLTVQPLLDIN.

Belongs to the poxviridae DNA-directed RNA polymerase 7 kDa subunit family. As to quaternary structure, the DNA-dependent RNA polymerase used for intermediate and late genes expression consists of eight subunits 147 kDa, 133 kDa, 35 kDa, 30 kDa, 22 kDa, 19 kDa, 18 kDa and 7 kDa totalling more than 500 kDa in mass. The same holoenzyme, with the addition of the transcription-specificity factor RAP94, is used for early gene expression.

Its subcellular location is the virion. It carries out the reaction RNA(n) + a ribonucleoside 5'-triphosphate = RNA(n+1) + diphosphate. Functionally, part of the DNA-dependent RNA polymerase which catalyzes the transcription of viral DNA into RNA using the four ribonucleoside triphosphates as substrates. Responsible for the transcription of early, intermediate and late genes. DNA-dependent RNA polymerase associates with the early transcription factor (ETF) thereby allowing the early genes transcription. Late transcription, and probably also intermediate transcription, require newly synthesized RNA polymerase. This Molluscum contagiosum virus subtype 1 (MOCV) protein is DNA-directed RNA polymerase 7 kDa subunit (RPO7).